We begin with the raw amino-acid sequence, 705 residues long: Ion-translocating oxidoreductase complex subunit C (705 aa).

2 4Fe-4S ferredoxin-type domains span residues 368-397 (MGETPEEQGCIRCSACADACPADLLPQQLY) and 407-435 (KATAHNIADCIECGACAWVCPSSIPLVQY). Positions 377, 380, 383, 387, 416, 419, 422, and 426 each coordinate [4Fe-4S] cluster. A disordered region spans residues 536 to 684 (RARQAENIPA…EPVDPRKAAV (149 aa)).

Belongs to the 4Fe4S bacterial-type ferredoxin family. RnfC subfamily. As to quaternary structure, the complex is composed of six subunits: RnfA, RnfB, RnfC, RnfD, RnfE and RnfG. It depends on [4Fe-4S] cluster as a cofactor.

Its subcellular location is the cell inner membrane. Its function is as follows. Part of a membrane-bound complex that couples electron transfer with translocation of ions across the membrane. The polypeptide is Ion-translocating oxidoreductase complex subunit C (Citrobacter koseri (strain ATCC BAA-895 / CDC 4225-83 / SGSC4696)).